Here is a 208-residue protein sequence, read N- to C-terminus: Uracil phosphoribosyltransferase (208 aa).

Residues arginine 78, arginine 103, and 130 to 138 (DPMFATGGT) each bind 5-phospho-alpha-D-ribose 1-diphosphate. Residues isoleucine 193 and 198-200 (GDA) each bind uracil. 5-phospho-alpha-D-ribose 1-diphosphate is bound at residue aspartate 199.

The protein belongs to the UPRTase family. Requires Mg(2+) as cofactor.

It catalyses the reaction UMP + diphosphate = 5-phospho-alpha-D-ribose 1-diphosphate + uracil. The protein operates within pyrimidine metabolism; UMP biosynthesis via salvage pathway; UMP from uracil: step 1/1. Its activity is regulated as follows. Allosterically activated by GTP. Its function is as follows. Catalyzes the conversion of uracil and 5-phospho-alpha-D-ribose 1-diphosphate (PRPP) to UMP and diphosphate. This Campylobacter jejuni subsp. jejuni serotype O:2 (strain ATCC 700819 / NCTC 11168) protein is Uracil phosphoribosyltransferase.